Here is a 272-residue protein sequence, read N- to C-terminus: Indole-3-glycerol phosphate synthase (272 aa).

Belongs to the TrpC family.

It catalyses the reaction 1-(2-carboxyphenylamino)-1-deoxy-D-ribulose 5-phosphate + H(+) = (1S,2R)-1-C-(indol-3-yl)glycerol 3-phosphate + CO2 + H2O. Its pathway is amino-acid biosynthesis; L-tryptophan biosynthesis; L-tryptophan from chorismate: step 4/5. This chain is Indole-3-glycerol phosphate synthase, found in Mycobacterium leprae (strain Br4923).